Consider the following 129-residue polypeptide: Small ribosomal subunit protein uS11 (129 aa).

The protein belongs to the universal ribosomal protein uS11 family. In terms of assembly, part of the 30S ribosomal subunit. Interacts with proteins S7 and S18. Binds to IF-3.

Its function is as follows. Located on the platform of the 30S subunit, it bridges several disparate RNA helices of the 16S rRNA. Forms part of the Shine-Dalgarno cleft in the 70S ribosome. This Levilactobacillus brevis (strain ATCC 367 / BCRC 12310 / CIP 105137 / JCM 1170 / LMG 11437 / NCIMB 947 / NCTC 947) (Lactobacillus brevis) protein is Small ribosomal subunit protein uS11.